The sequence spans 473 residues: Photosystem II CP43 reaction center protein (473 aa).

The propeptide occupies 1 to 14 (MKTLYSLRRFYHVE). Threonine 15 carries the post-translational modification N-acetylthreonine. Threonine 15 is subject to Phosphothreonine. 5 helical membrane passes run 69–93 (LFEV…PHLA), 134–155 (LLGP…KDRN), 178–200 (KALY…RKIT), 255–275 (KPFA…LSYS), and 291–312 (WFNN…ASQA). Glutamate 367 contributes to the [CaMn4O5] cluster binding site. The helical transmembrane segment at 447–471 (RARAAAAGFEKGIDRDFEPVLFMTP) threads the bilayer.

The protein belongs to the PsbB/PsbC family. PsbC subfamily. In terms of assembly, PSII is composed of 1 copy each of membrane proteins PsbA, PsbB, PsbC, PsbD, PsbE, PsbF, PsbH, PsbI, PsbJ, PsbK, PsbL, PsbM, PsbT, PsbX, PsbY, PsbZ, Psb30/Ycf12, at least 3 peripheral proteins of the oxygen-evolving complex and a large number of cofactors. It forms dimeric complexes. It depends on Binds multiple chlorophylls and provides some of the ligands for the Ca-4Mn-5O cluster of the oxygen-evolving complex. It may also provide a ligand for a Cl- that is required for oxygen evolution. PSII binds additional chlorophylls, carotenoids and specific lipids. as a cofactor.

It is found in the plastid. It localises to the chloroplast thylakoid membrane. One of the components of the core complex of photosystem II (PSII). It binds chlorophyll and helps catalyze the primary light-induced photochemical processes of PSII. PSII is a light-driven water:plastoquinone oxidoreductase, using light energy to abstract electrons from H(2)O, generating O(2) and a proton gradient subsequently used for ATP formation. In Solanum tuberosum (Potato), this protein is Photosystem II CP43 reaction center protein.